We begin with the raw amino-acid sequence, 486 residues long: ATP synthase subunit beta (486 aa).

The span at 1 to 12 (MTTTAEKTDRPG) shows a compositional bias: basic and acidic residues. The interval 1 to 22 (MTTTAEKTDRPGKPGSSDTSGR) is disordered. 171-178 (GGAGVGKT) contributes to the ATP binding site.

The protein belongs to the ATPase alpha/beta chains family. As to quaternary structure, F-type ATPases have 2 components, CF(1) - the catalytic core - and CF(0) - the membrane proton channel. CF(1) has five subunits: alpha(3), beta(3), gamma(1), delta(1), epsilon(1). CF(0) has three main subunits: a(1), b(2) and c(9-12). The alpha and beta chains form an alternating ring which encloses part of the gamma chain. CF(1) is attached to CF(0) by a central stalk formed by the gamma and epsilon chains, while a peripheral stalk is formed by the delta and b chains.

It localises to the cell membrane. The catalysed reaction is ATP + H2O + 4 H(+)(in) = ADP + phosphate + 5 H(+)(out). Functionally, produces ATP from ADP in the presence of a proton gradient across the membrane. The catalytic sites are hosted primarily by the beta subunits. This chain is ATP synthase subunit beta, found in Mycobacterium tuberculosis (strain ATCC 25177 / H37Ra).